The sequence spans 254 residues: 3-deoxy-manno-octulosonate cytidylyltransferase (254 aa).

Belongs to the KdsB family.

Its subcellular location is the cytoplasm. The catalysed reaction is 3-deoxy-alpha-D-manno-oct-2-ulosonate + CTP = CMP-3-deoxy-beta-D-manno-octulosonate + diphosphate. The protein operates within nucleotide-sugar biosynthesis; CMP-3-deoxy-D-manno-octulosonate biosynthesis; CMP-3-deoxy-D-manno-octulosonate from 3-deoxy-D-manno-octulosonate and CTP: step 1/1. It participates in bacterial outer membrane biogenesis; lipopolysaccharide biosynthesis. Activates KDO (a required 8-carbon sugar) for incorporation into bacterial lipopolysaccharide in Gram-negative bacteria. The chain is 3-deoxy-manno-octulosonate cytidylyltransferase from Pseudomonas aeruginosa (strain ATCC 15692 / DSM 22644 / CIP 104116 / JCM 14847 / LMG 12228 / 1C / PRS 101 / PAO1).